A 327-amino-acid polypeptide reads, in one-letter code: MFNDIPVFDYEDIQLIPNKCIITSRSQADTSVTLGKYQFKLPVIPANMQTIIDETIAEQLAKEGYFYIMHRFDEDSRKPFIKRMHEQGLIASISVGVKAYEYEFVTSLKEDTPEFITIDIAHGHANSVIDMIKHIKTELPETFVIAGNVGTPEAVRELENAGADATKVGIGPGKVCITKVKTGFGTGGWQLAALRWCAKAARKPIIADGGIRTHGDIAKSIRFGASMVMIGSLFAGHIESPGKTVEVNGETFKEYYGSASAYQKGEHKNVEGKKILLPTKGHLSDTLTEMQQDLQSSISYAGGKDLDSLRHVDYVIVKNSIWNGDSI.

Cys176 functions as the Thioimidate intermediate in the catalytic mechanism. 205–228 contributes to the NADP(+) binding site; that stretch reads IIADGGIRTHGDIAKSIRFGASMV.

It belongs to the IMPDH/GMPR family. GuaC type 2 subfamily.

It carries out the reaction IMP + NH4(+) + NADP(+) = GMP + NADPH + 2 H(+). In terms of biological role, catalyzes the irreversible NADPH-dependent deamination of GMP to IMP. It functions in the conversion of nucleobase, nucleoside and nucleotide derivatives of G to A nucleotides, and in maintaining the intracellular balance of A and G nucleotides. The sequence is that of GMP reductase from Streptococcus pyogenes serotype M6 (strain ATCC BAA-946 / MGAS10394).